A 542-amino-acid polypeptide reads, in one-letter code: Protein XP55 (542 aa).

Positions 1–33 are cleaved as a signal peptide; sequence MTARRTRWTRRTDRSLPIRSAAAAVAFAAGATA. C34 carries N-palmitoyl cysteine lipidation. C34 carries the S-diacylglycerol cysteine lipid modification. The segment at 519 to 542 is disordered; the sequence is LEGRTNTASPAGPGGTSRTGGRKK.

It belongs to the bacterial solute-binding protein 5 family.

It localises to the cell membrane. Required for transport of an unidentified substrate. The protein is Protein XP55 (xp55) of Streptomyces lividans.